The primary structure comprises 339 residues: tRNA-splicing endonuclease (339 aa).

Catalysis depends on residues Tyr274, His285, and Lys316.

It belongs to the tRNA-intron endonuclease family. Archaeal long subfamily. In terms of assembly, homodimer. It depends on Ca(2+) as a cofactor. The cofactor is Mg(2+). In terms of processing, the N-terminus is blocked.

The enzyme catalyses pretRNA = a 3'-half-tRNA molecule with a 5'-OH end + a 5'-half-tRNA molecule with a 2',3'-cyclic phosphate end + an intron with a 2',3'-cyclic phosphate and a 5'-hydroxyl terminus.. Functionally, endonuclease that removes tRNA introns. Cleaves pre-tRNA at the 5'- and 3'-splice sites to release the intron. The products are an intron and two tRNA half-molecules bearing 2',3' cyclic phosphate and 5'-OH termini. Recognizes a pseudosymmetric substrate in which 2 bulged loops of 3 bases are separated by a stem of 4 bp. In Haloferax volcanii (strain ATCC 29605 / DSM 3757 / JCM 8879 / NBRC 14742 / NCIMB 2012 / VKM B-1768 / DS2) (Halobacterium volcanii), this protein is tRNA-splicing endonuclease.